Here is a 438-residue protein sequence, read N- to C-terminus: Coenzyme A disulfide reductase (438 aa).

8 to 33 (GAVAGGATCASQIRRLDKESDIIIFE) is an FAD binding site. 5 residues coordinate substrate: Thr-15, Gln-19, Arg-22, Ser-39, and Asn-42. Cys-43 acts as the Nucleophile in catalysis. The active-site Redox-active is the Cys-43. Lys-71 serves as a coordination point for substrate. Residue 151–166 (VLVVGAGYVSLEVLEN) coordinates NADP(+). FAD is bound at residue 267 to 277 (TNVPNIYVIGD). His-299 lines the substrate pocket. Residue Tyr-419 coordinates FAD. Lys-427 serves as a coordination point for substrate.

The protein belongs to the class-III pyridine nucleotide-disulfide oxidoreductase family. In terms of assembly, homodimer. FAD serves as cofactor.

It catalyses the reaction NADP(+) + 2 CoA = CoA-disulfide + NADPH + H(+). Its function is as follows. Catalyzes specifically the NADPH-dependent reduction of coenzyme A disulfide. In Staphylococcus aureus (strain MRSA252), this protein is Coenzyme A disulfide reductase.